A 319-amino-acid chain; its full sequence is Aspartate carbamoyltransferase catalytic subunit (319 aa).

Carbamoyl phosphate-binding residues include R57 and T58. K85 serves as a coordination point for L-aspartate. The carbamoyl phosphate site is built by R107, H140, and Q143. Positions 173 and 227 each coordinate L-aspartate. Positions 268 and 269 each coordinate carbamoyl phosphate.

This sequence belongs to the aspartate/ornithine carbamoyltransferase superfamily. ATCase family. In terms of assembly, heterododecamer (2C3:3R2) of six catalytic PyrB chains organized as two trimers (C3), and six regulatory PyrI chains organized as three dimers (R2).

The enzyme catalyses carbamoyl phosphate + L-aspartate = N-carbamoyl-L-aspartate + phosphate + H(+). The protein operates within pyrimidine metabolism; UMP biosynthesis via de novo pathway; (S)-dihydroorotate from bicarbonate: step 2/3. In terms of biological role, catalyzes the condensation of carbamoyl phosphate and aspartate to form carbamoyl aspartate and inorganic phosphate, the committed step in the de novo pyrimidine nucleotide biosynthesis pathway. The sequence is that of Aspartate carbamoyltransferase catalytic subunit from Mycobacterium tuberculosis (strain ATCC 25177 / H37Ra).